Consider the following 91-residue polypeptide: Small ribosomal subunit protein bS20 (91 aa).

Residues 1-18 show a composition bias toward basic and acidic residues; it reads MPLHKSAEKRLRQSERRN. A disordered region spans residues 1 to 26; sequence MPLHKSAEKRLRQSERRNARNRSRKK.

It belongs to the bacterial ribosomal protein bS20 family.

Binds directly to 16S ribosomal RNA. This Pelodictyon phaeoclathratiforme (strain DSM 5477 / BU-1) protein is Small ribosomal subunit protein bS20.